The sequence spans 192 residues: Small ribosomal subunit protein uS5 (192 aa).

In terms of domain architecture, S5 DRBM spans 20-83; it reads FVDRLVHINR…EAAKRGLIRV (64 aa). The disordered stretch occupies residues 165–192; it reads ARRGLKVSALQARRRDAEPGSADSADAA.

This sequence belongs to the universal ribosomal protein uS5 family. As to quaternary structure, part of the 30S ribosomal subunit. Contacts proteins S4 and S8.

With S4 and S12 plays an important role in translational accuracy. Functionally, located at the back of the 30S subunit body where it stabilizes the conformation of the head with respect to the body. In Methylobacterium sp. (strain 4-46), this protein is Small ribosomal subunit protein uS5.